We begin with the raw amino-acid sequence, 100 residues long: NAD(P)H-quinone oxidoreductase subunit 4L, chloroplastic (100 aa).

3 helical membrane passes run 2–22 (ILQH…FGLI), 28–48 (VKIL…LVIF), and 61–81 (LFGL…LAIL).

Belongs to the complex I subunit 4L family. In terms of assembly, NDH is composed of at least 16 different subunits, 5 of which are encoded in the nucleus.

It is found in the plastid. It localises to the chloroplast thylakoid membrane. It carries out the reaction a plastoquinone + NADH + (n+1) H(+)(in) = a plastoquinol + NAD(+) + n H(+)(out). The catalysed reaction is a plastoquinone + NADPH + (n+1) H(+)(in) = a plastoquinol + NADP(+) + n H(+)(out). Its function is as follows. NDH shuttles electrons from NAD(P)H:plastoquinone, via FMN and iron-sulfur (Fe-S) centers, to quinones in the photosynthetic chain and possibly in a chloroplast respiratory chain. The immediate electron acceptor for the enzyme in this species is believed to be plastoquinone. Couples the redox reaction to proton translocation, and thus conserves the redox energy in a proton gradient. The polypeptide is NAD(P)H-quinone oxidoreductase subunit 4L, chloroplastic (Chara vulgaris (Common stonewort)).